We begin with the raw amino-acid sequence, 2003 residues long: MQPPSLLLLLLLLLLLCVSVVRPRGLLCGSFPEPCANGGTCLSLSLGQGTCQCAPGFLGETCQFPDPCQNAQLCQNGGSCQALLPAPLGLPSSPSPLTPSFLCTCLPGFTGERCQAKLEDPCPPSFCSKRGRCHIQASGRPQCSCMPGWTGEQCQLRDFCSANPCVNGGVCLATYPQIQCHCPPGFEGHACERDVNECFQDPGPCPKGTSCHNTLGSFQCLCPVGQEGPRCELRAGPCPPRGCSNGGTCQLMPEKDSTFHLCLCPPGFIGPDCEVNPDNCVSHQCQNGGTCQDGLDTYTCLCPETWTGWDCSEDVDECETQGPPHCRNGGTCQNSAGSFHCVCVSGWGGTSCEENLDDCIAATCAPGSTCIDRVGSFSCLCPPGRTGLLCHLEDMCLSQPCHGDAQCSTNPLTGSTLCLCQPGYSGPTCHQDLDECLMAQQGPSPCEHGGSCLNTPGSFNCLCPPGYTGSRCEADHNECLSQPCHPGSTCLDLLATFHCLCPPGLEGQLCEVETNECASAPCLNHADCHDLLNGFQCICLPGFSGTRCEEDIDECRSSPCANGGQCQDQPGAFHCKCLPGFEGPRCQTEVDECLSDPCPVGASCLDLPGAFFCLCPSGFTGQLCEVPLCAPNLCQPKQICKDQKDKANCLCPDGSPGCAPPEDNCTCHHGHCQRSSCVCDVGWTGPECEAELGGCISAPCAHGGTCYPQPSGYNCTCPTGYTGPTCSEEMTACHSGPCLNGGSCNPSPGGYYCTCPPSHTGPQCQTSTDYCVSAPCFNGGTCVNRPGTFSCLCAMGFQGPRCEGKLRPSCADSPCRNRATCQDSPQGPRCLCPTGYTGGSCQTLMDLCAQKPCPRNSHCLQTGPSFHCLCLQGWTGPLCNLPLSSCQKAALSQGIDVSSLCHNGGLCVDSGPSYFCHCPPGFQGSLCQDHVNPCESRPCQNGATCMAQPSGYLCQCAPGYDGQNCSKELDACQSQPCHNHGTCTPKPGGFHCACPPGFVGLRCEGDVDECLDQPCHPTGTAACHSLANAFYCQCLPGHTGQWCEVEIDPCHSQPCFHGGTCEATAGSPLGFICHCPKGFEGPTCSHRAPSCGFHHCHHGGLCLPSPKPGFPPRCACLSGYGGPDCLTPPAPKGCGPPSPCLYNGSCSETTGLGGPGFRCSCPHSSPGPRCQKPGAKGCEGRSGDGACDAGCSGPGGNWDGGDCSLGVPDPWKGCPSHSRCWLLFRDGQCHPQCDSEECLFDGYDCETPPACTPAYDQYCHDHFHNGHCEKGCNTAECGWDGGDCRPEDGDPEWGPSLALLVVLSPPALDQQLFALARVLSLTLRVGLWVRKDRDGRDMVYPYPGARAEEKLGGTRDPTYQERAAPQTQPLGKETDSLSAGFVVVMGVDLSRCGPDHPASRCPWDPGLLLRFLAAMAAVGALEPLLPGPLLAVHPHAGTAPPANQLPWPVLCSPVAGVILLALGALLVLQLIRRRRREHGALWLPPGFTRRPRTQSAPHRRRPPLGEDSIGLKALKPKAEVDEDGVVMCSGPEEGEEVGQAEETGPPSTCQLWSLSGGCGALPQAAMLTPPQESEMEAPDLDTRGPDGVTPLMSAVCCGEVQSGTFQGAWLGCPEPWEPLLDGGACPQAHTVGTGETPLHLAARFSRPTAARRLLEAGANPNQPDRAGRTPLHAAVAADAREVCQLLLRSRQTAVDARTEDGTTPLMLAARLAVEDLVEELIAAQADVGARDKWGKTALHWAAAVNNARAARSLLQAGADKDAQDNREQTPLFLAAREGAVEVAQLLLGLGAARELRDQAGLAPADVAHQRNHWDLLTLLEGAGPPEARHKATPGREAGPFPRARTVSVSVPPHGGGALPRCRTLSAGAGPRGGGACLQARTWSVDLAARGGGAYSHCRSLSGVGAGGGPTPRGRRFSAGMRGPRPNPAIMRGRYGVAAGRGGRVSTDDWPCDWVALGACGSASNIPIPPPCLTPSPERGSPQLDCGPPALQEMPINQGGEGKK.

The first 23 residues, 1–23, serve as a signal peptide directing secretion; that stretch reads MQPPSLLLLLLLLLLLCVSVVRP. 4 EGF-like domains span residues 24-63, 64-115, 118-155, and 156-192; these read RGLL…ETCQ, FPDP…ERCQ, LEDP…EQCQ, and LRDF…HACE. Residues 24-1447 are Extracellular-facing; it reads RGLLCGSFPE…TAPPANQLPW (1424 aa). 48 disulfides stabilise this stretch: C28/C41, C35/C51, C53/C62, C68/C80, C74/C103, C105/C114, C122/C133, C127/C143, C145/C154, C160/C171, C165/C180, C182/C191, C198/C211, C205/C220, C222/C231, C238/C249, C243/C262, C264/C273, C280/C291, C285/C300, C302/C311, C318/C332, C326/C341, C343/C352, C359/C370, C364/C379, C381/C390, C396/C407, C401/C418, C420/C429, C436/C452, C446/C461, C463/C472, C479/C490, C484/C499, C501/C510, C517/C528, C522/C537, C539/C548, C555/C566, C560/C575, C577/C586, C593/C604, C598/C613, C615/C624, C629/C640, C634/C649, and C651/C658. An EGF-like 5; calcium-binding domain is found at 194-232; it reads DVNECFQDPGPCPKGTSCHNTLGSFQCLCPVGQEGPRCE. In terms of domain architecture, EGF-like 6 spans 234-274; that stretch reads RAGPCPPRGCSNGGTCQLMPEKDSTFHLCLCPPGFIGPDCE. The 37-residue stretch at 276-312 folds into the EGF-like 7; calcium-binding domain; sequence NPDNCVSHQCQNGGTCQDGLDTYTCLCPETWTGWDCS. In terms of domain architecture, EGF-like 8; calcium-binding spans 314–353; the sequence is DVDECETQGPPHCRNGGTCQNSAGSFHCVCVSGWGGTSCE. The 37-residue stretch at 355-391 folds into the EGF-like 9; calcium-binding domain; that stretch reads NLDDCIAATCAPGSTCIDRVGSFSCLCPPGRTGLLCH. In terms of domain architecture, EGF-like 10 spans 392–430; that stretch reads LEDMCLSQPCHGDAQCSTNPLTGSTLCLCQPGYSGPTCH. The region spanning 432-473 is the EGF-like 11; calcium-binding domain; it reads DLDECLMAQQGPSPCEHGGSCLNTPGSFNCLCPPGYTGSRCE. One can recognise an EGF-like 12; calcium-binding domain in the interval 475–511; it reads DHNECLSQPCHPGSTCLDLLATFHCLCPPGLEGQLCE. Positions 513–549 constitute an EGF-like 13; calcium-binding domain; sequence ETNECASAPCLNHADCHDLLNGFQCICLPGFSGTRCE. The EGF-like 14; calcium-binding domain occupies 551–587; sequence DIDECRSSPCANGGQCQDQPGAFHCKCLPGFEGPRCQ. In terms of domain architecture, EGF-like 15; calcium-binding spans 589 to 625; sequence EVDECLSDPCPVGASCLDLPGAFFCLCPSGFTGQLCE. EGF-like domains lie at 626 to 659, 661 to 689, 691 to 727, 729 to 765, 767 to 803, 806 to 842, 844 to 880, 882 to 928, 930 to 966, 968 to 1004, 1006 to 1044, 1046 to 1085, 1087 to 1126, and 1130 to 1171; these read VPLC…PGCA, PEDN…PECE, ELGG…PTCS, EMTA…PQCQ, STDY…PRCE, LRPS…GSCQ, LMDL…PLCN, PLSS…SLCQ, HVNP…QNCS, ELDA…LRCE, DVDE…QWCE, EIDP…PTCS, RAPS…PDCL, and APKG…PRCQ. A glycan (N-linked (GlcNAc...) asparagine) is linked at N664. 47 disulfide bridges follow: C665/C672, C667/C677, C679/C688, C695/C706, C700/C715, C717/C726, C733/C744, C738/C753, C755/C764, C771/C782, C776/C791, C793/C802, C810/C821, C815/C830, C832/C841, C848/C859, C853/C868, C870/C879, C886/C907, C901/C916, C918/C927, C934/C945, C939/C954, C956/C965, C972/C983, C977/C992, C994/C1003, C1010/C1023, C1015/C1032, C1034/C1043, C1050/C1061, C1055/C1073, C1075/C1084, C1091/C1102, C1096/C1114, C1116/C1125, C1134/C1146, C1140/C1159, C1161/C1170, C1178/C1191, C1187/C1203, C1214/C1238, C1220/C1233, C1229/C1245, C1251/C1277, C1259/C1272, and C1268/C1284. N-linked (GlcNAc...) asparagine glycosylation is present at N714. N964 is a glycosylation site (N-linked (GlcNAc...) asparagine). N1143 carries N-linked (GlcNAc...) asparagine glycosylation. 3 LNR repeats span residues 1170-1213, 1214-1250, and 1251-1294; these read CQKP…PWKG, CPSH…TPPA, and CTPA…PEWG. The interval 1347-1371 is disordered; sequence AEEKLGGTRDPTYQERAAPQTQPLG. A helical membrane pass occupies residues 1448 to 1468; that stretch reads PVLCSPVAGVILLALGALLVL. Over 1469-2003 the chain is Cytoplasmic; it reads QLIRRRRREH…PINQGGEGKK (535 aa). Positions 1485 to 1508 are disordered; it reads PGFTRRPRTQSAPHRRRPPLGEDS. A compositionally biased stretch (basic residues) spans 1489 to 1502; the sequence is RRPRTQSAPHRRRP. ANK repeat units lie at residues 1633-1665, 1666-1698, 1700-1732, 1733-1765, and 1766-1798; these read TGET…QPDR, AGRT…DART, DGTT…ARDK, WGKT…AQDN, and REQT…LRDQ. Disordered stretches follow at residues 1900–1927 and 1968–2003; these read LSGV…RPNP and PPPC…EGKK.

The protein belongs to the NOTCH family. In terms of assembly, heterodimer of a C-terminal fragment N(TM) and a N-terminal fragment N(EC) which are probably linked by disulfide bonds. Interacts with MAML1, MAML2 and MAML3 which act as transcriptional coactivators for NOTCH4. As to quaternary structure, (Microbial infection) Interacts with Epstein-Barr virus (EBV) RK-BARF0. In terms of processing, synthesized in the endoplasmic reticulum as an inactive form which is proteolytically cleaved by a furin-like convertase in the trans-Golgi network before it reaches the plasma membrane to yield an active, ligand-accessible form. Cleavage results in a C-terminal fragment N(TM) and a N-terminal fragment N(EC). Following ligand binding, it is cleaved by TNF-alpha converting enzyme (TACE) to yield a membrane-associated intermediate fragment called notch extracellular truncation (NEXT). This fragment is then cleaved by presenilin dependent gamma-secretase to release a notch-derived peptide containing the intracellular domain (NICD) from the membrane. Phosphorylated. In terms of tissue distribution, highly expressed in the heart, moderately in the lung and placenta and at low levels in the liver, skeletal muscle, kidney, pancreas, spleen, lymph node, thymus, bone marrow and fetal liver. No expression was seen in adult brain or peripheral blood leukocytes.

Its subcellular location is the cell membrane. It localises to the nucleus. Functionally, functions as a receptor for membrane-bound ligands Jagged1, Jagged2 and Delta1 to regulate cell-fate determination. Upon ligand activation through the released notch intracellular domain (NICD) it forms a transcriptional activator complex with RBPJ/RBPSUH and activates genes of the enhancer of split locus. Affects the implementation of differentiation, proliferation and apoptotic programs. May regulate branching morphogenesis in the developing vascular system. The sequence is that of Neurogenic locus notch homolog protein 4 from Homo sapiens (Human).